A 502-amino-acid chain; its full sequence is Na(+)/H(+) antiporter NhaB (502 aa).

11 consecutive transmembrane segments (helical) span residues 27–49 (AFLV…VLIL), 66–86 (PGGL…ESVF), 95–115 (VILL…LLLY), 128–148 (IVLS…LDAL), 149–169 (TVTA…HQFA), 241–261 (FFLQ…VTCI), 299–318 (IAAL…SLAL), 350–370 (FEEA…VAVI), 394–414 (MFFI…VATV), 450–470 (ATPN…APLI), and 477–497 (MVLM…IAVY).

It belongs to the NhaB Na(+)/H(+) (TC 2.A.34) antiporter family.

It is found in the cell inner membrane. It carries out the reaction 2 Na(+)(in) + 3 H(+)(out) = 2 Na(+)(out) + 3 H(+)(in). In terms of biological role, na(+)/H(+) antiporter that extrudes sodium in exchange for external protons. The chain is Na(+)/H(+) antiporter NhaB from Teredinibacter turnerae (strain ATCC 39867 / T7901).